A 1754-amino-acid chain; its full sequence is Probable outer membrane protein PmpB (1754 aa).

The N-terminal stretch at 1–14 is a signal peptide; it reads MSSMKWLSATAVFA. Low complexity-rich tracts occupy residues 68-105 and 212-232; these read NIPTTDTTTPTNSNSSSSNGETASVSEDSDSTTTTPDP and SETSGSSSSSGNDSVSSPSSS. Disordered regions lie at residues 68–109, 190–235, 252–271, 397–438, 621–668, and 1299–1332; these read NIPT…KGGG, SSNS…SRAE, PAAQTDTETSTPSHKPGSGG, NADA…ATAK, AAEN…STPS, and TSSASGGSGVSSSIPTNPKRISAAAPSGSAATTP. Composition is skewed to polar residues over residues 252–264 and 402–412; these read PAAQTDTETSTPS and ASSSPQSGSGA. Low complexity-rich tracts occupy residues 413-427, 636-668, 1299-1311, and 1320-1332; these read TTVSNSGDSSSGSDS, PTADTAEQPAAASAATSTPESAPVVSTALSTPS, TSSASGGSGVSSS, and SAAAPSGSAATTP. In terms of domain architecture, Autotransporter spans 1461–1754; the sequence is DDIAYNNFWV…MTSCGARMIF (294 aa).

The protein belongs to the PMP outer membrane protein family.

It is found in the secreted. The protein localises to the cell wall. Its subcellular location is the cell outer membrane. In Chlamydia trachomatis serovar D (strain ATCC VR-885 / DSM 19411 / UW-3/Cx), this protein is Probable outer membrane protein PmpB (pmpB).